A 487-amino-acid polypeptide reads, in one-letter code: Cytochrome P450 2C21 (487 aa).

Position 432 (Cys-432) interacts with heme.

This sequence belongs to the cytochrome P450 family. Heme serves as cofactor. In terms of tissue distribution, liver.

The protein localises to the endoplasmic reticulum membrane. It localises to the microsome membrane. The enzyme catalyses an organic molecule + reduced [NADPH--hemoprotein reductase] + O2 = an alcohol + oxidized [NADPH--hemoprotein reductase] + H2O + H(+). Functionally, cytochromes P450 are a group of heme-thiolate monooxygenases. In liver microsomes, this enzyme is involved in an NADPH-dependent electron transport pathway. It oxidizes a variety of structurally unrelated compounds, including steroids, fatty acids, and xenobiotics. Showed testosterone hydrolase activity. In Canis lupus familiaris (Dog), this protein is Cytochrome P450 2C21 (CYP2C21).